Consider the following 1043-residue polypeptide: Ras guanine nucleotide exchange factor S (1043 aa).

The stretch at 109–142 (IETLQTQRRQSTLNIQALQINNELQQQLQQQQQL) forms a coiled coil. Composition is skewed to low complexity over residues 135-145 (QLQQQQQLPPI), 245-258 (LSPL…GLSS), 266-281 (SKNQ…NSSS), and 293-307 (NNNN…SNSS). 2 disordered regions span residues 135–160 (QLQQ…TSTI) and 245–316 (LSPL…HQSQ). A coiled-coil region spans residues 404–434 (LAVSLQNVEGLQNIAENLEDETLNLLDLVNE). In terms of domain architecture, N-terminal Ras-GEF spans 645 to 768 (KDGSILKVTL…LLRGLLDKMI (124 aa)). Positions 803 to 1043 (SAQSIAQQLT…YDLSIALEPK (241 aa)) constitute a Ras-GEF domain.

Functionally, promotes the exchange of Ras-bound GDP by GTP. This Dictyostelium discoideum (Social amoeba) protein is Ras guanine nucleotide exchange factor S (gefS).